The sequence spans 253 residues: Serine/threonine-protein phosphatase 3 (253 aa).

Mn(2+) serves as cofactor. In terms of processing, phosphorylated by YegI.

It carries out the reaction O-phospho-L-seryl-[protein] + H2O = L-seryl-[protein] + phosphate. The enzyme catalyses O-phospho-L-threonyl-[protein] + H2O = L-threonyl-[protein] + phosphate. With respect to regulation, activity dramatically decreases in the presence of the general protein phosphatase inhibitor sodium phosphate. Slightly inhibited by sodium fluoride. Activity decreases in the presence of the metal chelator EDTA. In terms of biological role, PP2C-like phosphatase that can dephosphorylate YegI. In vitro, can hydrolyze p-nitrophenyl phosphate (pNPP) to p-nitrophenol. This Escherichia coli (strain K12) protein is Serine/threonine-protein phosphatase 3.